The following is a 525-amino-acid chain: Light-independent protochlorophyllide reductase subunit B (525 aa).

[4Fe-4S] cluster is bound at residue aspartate 36. Aspartate 290 (proton donor) is an active-site residue. Substrate is bound at residue 425-426 (GL).

This sequence belongs to the ChlB/BchB/BchZ family. In terms of assembly, protochlorophyllide reductase is composed of three subunits; ChlL, ChlN and ChlB. Forms a heterotetramer of two ChlB and two ChlN subunits. [4Fe-4S] cluster is required as a cofactor.

The enzyme catalyses chlorophyllide a + oxidized 2[4Fe-4S]-[ferredoxin] + 2 ADP + 2 phosphate = protochlorophyllide a + reduced 2[4Fe-4S]-[ferredoxin] + 2 ATP + 2 H2O. Its pathway is porphyrin-containing compound metabolism; chlorophyll biosynthesis (light-independent). Component of the dark-operative protochlorophyllide reductase (DPOR) that uses Mg-ATP and reduced ferredoxin to reduce ring D of protochlorophyllide (Pchlide) to form chlorophyllide a (Chlide). This reaction is light-independent. The NB-protein (ChlN-ChlB) is the catalytic component of the complex. In Prochlorococcus marinus (strain MIT 9312), this protein is Light-independent protochlorophyllide reductase subunit B.